The sequence spans 187 residues: UPF0301 protein YqgE (187 aa).

It belongs to the UPF0301 (AlgH) family.

This is UPF0301 protein YqgE from Escherichia coli O127:H6 (strain E2348/69 / EPEC).